Consider the following 457-residue polypeptide: Flavohemoprotein-2 (457 aa).

Residues 2–157 (ALSEDTIKAV…LADLLIKREE (156 aa)) form the Globin domain. His-106 is a binding site for heme b. Active-site charge relay system residues include Tyr-116 and Glu-156. The segment at 168-456 (GGWRQTRTFR…FEMFGPFKAS (289 aa)) is reductase. The region spanning 171–278 (RQTRTFRVEE…APPYGDFFLR (108 aa)) is the FAD-binding FR-type domain. Residues Tyr-210 and 227–230 (RQYS) each bind FAD. An NADP(+)-binding site is contributed by 320–325 (GIGQTP). 449 to 452 (MFGP) provides a ligand contact to FAD.

This sequence belongs to the globin family. Two-domain flavohemoproteins subfamily. In the C-terminal section; belongs to the flavoprotein pyridine nucleotide cytochrome reductase family. In terms of assembly, monomer. Heme b is required as a cofactor. Requires FAD as cofactor.

It catalyses the reaction 2 nitric oxide + NADPH + 2 O2 = 2 nitrate + NADP(+) + H(+). It carries out the reaction 2 nitric oxide + NADH + 2 O2 = 2 nitrate + NAD(+) + H(+). Functionally, flavohemoprotein involved in nitric oxide (NO) detoxification in an aerobic process, termed nitric oxide dioxygenase (NOD) reaction that utilizes O(2) and NAD(P)H to convert NO to nitrate, which protects the protozoan parasite from various noxious nitrogen compounds. Therefore, plays a central role in the inducible response to nitrosative stress. May also be involved in O(2) detoxification. The chain is Flavohemoprotein-2 (hmpA-2) from Giardia intestinalis (strain P15) (Giardia lamblia).